We begin with the raw amino-acid sequence, 513 residues long: Zinc finger protein 395 (513 aa).

Low complexity predominate over residues 17–29 (ARVLGPSASEGPS). The interval 17 to 56 (ARVLGPSASEGPSAAPPSEPLLEGAAPQPFTTSDDTPCQE) is disordered. The span at 45 to 55 (PFTTSDDTPCQ) shows a compositional bias: polar residues. Residues 165–174 (MDEMMAAMVL) carry the Nuclear export signal motif. The disordered stretch occupies residues 204 to 269 (KESGDISDSG…DPFLLDEPAP (66 aa)). Positions 209–229 (ISDSGSSTTSGHWSGSSGVST) are enriched in low complexity. Ser-248 carries the post-translational modification Phosphoserine. A C2H2-type zinc finger spans residues 280 to 305 (YKCLWPNCGKVLRSIVGIKRHVKALH). A disordered region spans residues 335-394 (AAAAAAAGTPVPGTPTSEPAPTPSMTGLPLSALPPPLHKAQSSGPEHPGPESSLPSGALS). Residues 348–359 (TPTSEPAPTPSM) are compositionally biased toward polar residues. Phosphoserine occurs at positions 376 and 449. A compositionally biased stretch (low complexity) spans 376–391 (SSGPEHPGPESSLPSG).

In terms of assembly, interacts with repression-mediating E2 binding site P2 of human papillomavirus type 8 (HPV8). Widely expressed.

The protein localises to the cytoplasm. It localises to the nucleus. In terms of biological role, plays a role in papillomavirus genes transcription. This Homo sapiens (Human) protein is Zinc finger protein 395 (ZNF395).